Consider the following 92-residue polypeptide: Small ribosomal subunit protein bS21 (92 aa).

Residues 37–92 (QREGTFREMKRRNHYEKPSEKKARQKAEAIRRARKLARKRAQREGLIAKRGGTTRR) are disordered. Residues 51–67 (YEKPSEKKARQKAEAIR) are compositionally biased toward basic and acidic residues. Basic residues predominate over residues 68–77 (RARKLARKRA).

This sequence belongs to the bacterial ribosomal protein bS21 family.

The chain is Small ribosomal subunit protein bS21 from Maricaulis maris (strain MCS10) (Caulobacter maris).